We begin with the raw amino-acid sequence, 117 residues long: Venom protein TxLP11 (117 aa).

The N-terminal stretch at 1–22 (MNTKTLIVVFLVCLLVSEVVLA) is a signal peptide.

Contains 4 disulfide bonds. As to expression, expressed by the venom gland.

The protein localises to the secreted. The sequence is that of Venom protein TxLP11 from Lychas mucronatus (Chinese swimming scorpion).